Consider the following 286-residue polypeptide: Putative short-chain type dehydrogenase/reductase Rv0148 (286 aa).

Val11–Val35 serves as a coordination point for NAD(+). Ser151 lines the substrate pocket. Tyr164 (proton acceptor) is an active-site residue. Lys280 is covalently cross-linked (Isoglutamyl lysine isopeptide (Lys-Gln) (interchain with Q-Cter in protein Pup)).

The protein belongs to the short-chain dehydrogenases/reductases (SDR) family. Pupylated at Lys-280 by the prokaryotic ubiquitin-like protein Pup, which probably leads to its degradation by the proteasome.

The protein is Putative short-chain type dehydrogenase/reductase Rv0148 of Mycobacterium tuberculosis (strain ATCC 25618 / H37Rv).